Here is a 126-residue protein sequence, read N- to C-terminus: Large ribosomal subunit protein uL22 (126 aa).

The protein belongs to the universal ribosomal protein uL22 family. In terms of assembly, part of the 50S ribosomal subunit.

In terms of biological role, this protein binds specifically to 23S rRNA; its binding is stimulated by other ribosomal proteins, e.g. L4, L17, and L20. It is important during the early stages of 50S assembly. It makes multiple contacts with different domains of the 23S rRNA in the assembled 50S subunit and ribosome. Functionally, the globular domain of the protein is located near the polypeptide exit tunnel on the outside of the subunit, while an extended beta-hairpin is found that lines the wall of the exit tunnel in the center of the 70S ribosome. This is Large ribosomal subunit protein uL22 from Paracoccus denitrificans (strain Pd 1222).